A 170-amino-acid polypeptide reads, in one-letter code: Large ribosomal subunit protein uL10 (170 aa).

Belongs to the universal ribosomal protein uL10 family. As to quaternary structure, part of the ribosomal stalk of the 50S ribosomal subunit. The N-terminus interacts with L11 and the large rRNA to form the base of the stalk. The C-terminus forms an elongated spine to which L12 dimers bind in a sequential fashion forming a multimeric L10(L12)X complex.

Its function is as follows. Forms part of the ribosomal stalk, playing a central role in the interaction of the ribosome with GTP-bound translation factors. The polypeptide is Large ribosomal subunit protein uL10 (Fusobacterium nucleatum subsp. nucleatum (strain ATCC 25586 / DSM 15643 / BCRC 10681 / CIP 101130 / JCM 8532 / KCTC 2640 / LMG 13131 / VPI 4355)).